Consider the following 108-residue polypeptide: uncharacterized protein (108 aa).

This is an uncharacterized protein from Saccharolobus islandicus (Sulfolobus islandicus).